Here is a 181-residue protein sequence, read N- to C-terminus: Large ribosomal subunit protein uL5c (181 aa).

This sequence belongs to the universal ribosomal protein uL5 family. Part of the 50S ribosomal subunit; contacts the 5S rRNA.

It is found in the plastid. The protein localises to the cyanelle. Binds 5S rRNA, forms part of the central protuberance of the 50S subunit. The sequence is that of Large ribosomal subunit protein uL5c (rpl5) from Cyanophora paradoxa.